The primary structure comprises 325 residues: Diacylglycerol acyltransferase/mycolyltransferase Ag85B (325 aa).

The N-terminal stretch at 1–40 is a signal peptide; it reads MTDVSRKIRAWGRRLMIGTAAAVVLPGLVGLAGGAATAGA. 82 to 83 contacts substrate; that stretch reads LR. Residues 98-108 are fibronectin-binding; that stretch reads FEWYYQSGLSI. Cys-127 and Cys-132 form a disulfide bridge. Residues Ser-166 and Asp-194 each coordinate substrate. Residue Ser-166 is the Nucleophile of the active site. The active site involves Glu-270. Substrate-binding positions include 272-275, Lys-279, and 302-304; these read FVRS and HSW. The active site involves His-302.

The protein belongs to the mycobacterial A85 antigen family.

It localises to the secreted. It catalyses the reaction 2 alpha,alpha'-trehalose 6-mycolate = alpha,alpha'-trehalose 6,6'-bismycolate + alpha,alpha-trehalose. The enzyme catalyses an acyl-CoA + a 1,2-diacyl-sn-glycerol = a triacyl-sn-glycerol + CoA. Functionally, the antigen 85 proteins (FbpA, FbpB, FbpC) are responsible for the high affinity of mycobacteria for fibronectin, a large adhesive glycoprotein, which facilitates the attachment of Mycobacteria to murine alveolar macrophages (AMs). They also help to maintain the integrity of the cell wall by catalyzing the transfer of mycolic acids to cell wall arabinogalactan and through the synthesis of alpha,alpha-trehalose dimycolate (TDM, cord factor). They catalyze the transfer of a mycoloyl residue from one molecule of alpha,alpha-trehalose monomycolate (TMM) to another TMM, leading to the formation of TDM. This Mycobacterium bovis (strain BCG / Pasteur 1173P2) protein is Diacylglycerol acyltransferase/mycolyltransferase Ag85B (fbpB).